The chain runs to 111 residues: Rhodanese domain-containing protein CG4456 (111 aa).

The 99-residue stretch at 12-110 (NHPDVYLIDV…SWNEWAQKEG (99 aa)) folds into the Rhodanese domain.

The chain is Rhodanese domain-containing protein CG4456 from Drosophila melanogaster (Fruit fly).